Here is a 287-residue protein sequence, read N- to C-terminus: Protein REVEILLE 3 (287 aa).

In terms of domain architecture, HTH myb-type spans 56–110; it reads TITKSRENWTEQEHDKFLEALHLFDRDWKKIKAFVGSKTVIQIRSHAQKYFLKVQ. A DNA-binding region (H-T-H motif) is located at residues 83–106; it reads WKKIKAFVGSKTVIQIRSHAQKYF. A disordered region spans residues 111-135; it reads KNGTKEHLPPPRPKRKANHPYPQKA.

The protein localises to the nucleus. Its function is as follows. Probable transcription factor. The protein is Protein REVEILLE 3 (RVE3) of Arabidopsis thaliana (Mouse-ear cress).